The following is a 532-amino-acid chain: Putative F-box/LRR-repeat protein At3g42770 (532 aa).

One can recognise an F-box domain in the interval 1 to 46 (MNCLPDELLVQILSFLPTKEATSTSLLSKRWRTLFTLSPNLDFDNS). 3 LRR repeats span residues 113 to 135 (VSEL…IFTS), 279 to 305 (IRNV…EIPM), and 398 to 420 (MNDL…SPKL).

The protein is Putative F-box/LRR-repeat protein At3g42770 of Arabidopsis thaliana (Mouse-ear cress).